We begin with the raw amino-acid sequence, 1295 residues long: Phosphoribosylformylglycinamidine synthase (1295 aa).

Residues 305 to 327 (WPGAATGSGGEIRDEGATGRGAK) are disordered. ATP-binding positions include 307-318 (GAATGSGGEIRD), 386-388 (TGY), and Ala678. The Mg(2+) site is built by Asp679, Glu718, Asn722, and Asp884. Ser886 is a binding site for ATP. Positions 1042–1295 (VAVLREQGVN…IFRNARKQLG (254 aa)) constitute a Glutamine amidotransferase type-1 domain. The Nucleophile role is filled by Cys1135. Residues His1260 and Glu1262 contribute to the active site.

This sequence in the N-terminal section; belongs to the FGAMS family. Monomer.

It is found in the cytoplasm. The catalysed reaction is N(2)-formyl-N(1)-(5-phospho-beta-D-ribosyl)glycinamide + L-glutamine + ATP + H2O = 2-formamido-N(1)-(5-O-phospho-beta-D-ribosyl)acetamidine + L-glutamate + ADP + phosphate + H(+). It functions in the pathway purine metabolism; IMP biosynthesis via de novo pathway; 5-amino-1-(5-phospho-D-ribosyl)imidazole from N(2)-formyl-N(1)-(5-phospho-D-ribosyl)glycinamide: step 1/2. Phosphoribosylformylglycinamidine synthase involved in the purines biosynthetic pathway. Catalyzes the ATP-dependent conversion of formylglycinamide ribonucleotide (FGAR) and glutamine to yield formylglycinamidine ribonucleotide (FGAM) and glutamate. The polypeptide is Phosphoribosylformylglycinamidine synthase (Salmonella typhi).